The chain runs to 183 residues: MKKKTSLSEEDQALFRQLMVGTRQIKQDTIVHRPLRKKITEVPTRRLIQEQADASHYFSDEFQPLLNTEGPVKYVREDVSHFELKKMRRGDYSPELFLDLHGLTQLQAKQELGALIAACRREHIFCACVMHGHGKHILKQQTPLWLAQHPHVMAFHQAPKEYGGDAALLVLIEVEEWQPPELP.

Positions 98–173 (LDLHGLTQLQ…GDAALLVLIE (76 aa)) constitute a Smr domain.

Belongs to the SmrB family. As to quaternary structure, associates with collided ribosomes, but not with correctly translating polysomes.

Its function is as follows. Acts as a ribosome collision sensor. Detects stalled/collided disomes (pairs of ribosomes where the leading ribosome is stalled and a second ribosome has collided with it) and endonucleolytically cleaves mRNA at the 5' boundary of the stalled ribosome. Stalled/collided disomes form a new interface (primarily via the 30S subunits) that binds SmrB. Cleaved mRNA becomes available for tmRNA ligation, leading to ribosomal subunit dissociation and rescue of stalled ribosomes. This Salmonella paratyphi A (strain ATCC 9150 / SARB42) protein is Ribosome rescue factor SmrB.